The primary structure comprises 292 residues: Ribosomal protein L11 methyltransferase (292 aa).

S-adenosyl-L-methionine-binding residues include threonine 143, glycine 164, aspartate 186, and asparagine 228.

The protein belongs to the methyltransferase superfamily. PrmA family.

The protein resides in the cytoplasm. It catalyses the reaction L-lysyl-[protein] + 3 S-adenosyl-L-methionine = N(6),N(6),N(6)-trimethyl-L-lysyl-[protein] + 3 S-adenosyl-L-homocysteine + 3 H(+). Methylates ribosomal protein L11. This Aeromonas hydrophila subsp. hydrophila (strain ATCC 7966 / DSM 30187 / BCRC 13018 / CCUG 14551 / JCM 1027 / KCTC 2358 / NCIMB 9240 / NCTC 8049) protein is Ribosomal protein L11 methyltransferase.